Consider the following 486-residue polypeptide: E3 ubiquitin-protein ligase TRIM50 (486 aa).

The RING-type zinc-finger motif lies at Cys16–Arg57. Residues Pro84 to Val125 form a B box-type zinc finger. Zn(2+)-binding residues include Cys89, His92, Cys111, and His117. Coiled-coil stretches lie at residues Val125–Val170 and Leu204–Glu235. The B30.2/SPRY domain occupies Asp275–Gly474. At Lys372 the chain carries N6-acetyllysine.

Belongs to the TRIM/RBCC family. Can form dimers and trimers. Interacts with several E2 ubiquitin-conjugating enzymes, including UBE2L6, UBE2E1, UBE2E3. No interaction with UBE2H. Interacts with BECN1. Interacts with SQSTM1. Interacts with NLRP3. Auto-ubiquitinated. In terms of processing, acetylated by EP300 and KAT2B. HDAC6 drives TRIM50 deacetylation. Acetylation antagonizes with TRIM50 ubiquitination.

It is found in the cytoplasm. It carries out the reaction S-ubiquitinyl-[E2 ubiquitin-conjugating enzyme]-L-cysteine + [acceptor protein]-L-lysine = [E2 ubiquitin-conjugating enzyme]-L-cysteine + N(6)-ubiquitinyl-[acceptor protein]-L-lysine.. Its function is as follows. E3 ubiquitin-protein ligase that ubiquitinates Beclin-1/BECN1 in a 'Lys-63'-dependent manner enhancing its binding to ULK1. In turn, promotes starvation-induced autophagy activation. Also interacts with p62/SQSTM1 protein and thereby induces the formation and the autophagy clearance of aggresome-associated polyubiquitinated proteins through HDAC6 interaction. Also promotes NLRP3 inflammasome activation by directly inducing NLRP3 oligomerization independent of its E3 ligase function. This chain is E3 ubiquitin-protein ligase TRIM50 (TRIM50), found in Sus scrofa (Pig).